The following is a 39-amino-acid chain: Contryphan-Cal2 (39 aa).

The first 20 residues, 1–20 (MTRTAVLLLTLLFLVAMAAS), serve as a signal peptide directing secretion. Residues Cys-29 and Cys-35 are joined by a disulfide bond.

Expressed by the venom duct.

It localises to the secreted. Probable neurotoxin. This is Contryphan-Cal2 from Californiconus californicus (California cone).